The chain runs to 247 residues: Cell division protein ZapD (247 aa).

This sequence belongs to the ZapD family. As to quaternary structure, interacts with FtsZ.

It is found in the cytoplasm. In terms of biological role, cell division factor that enhances FtsZ-ring assembly. Directly interacts with FtsZ and promotes bundling of FtsZ protofilaments, with a reduction in FtsZ GTPase activity. In Salmonella agona (strain SL483), this protein is Cell division protein ZapD.